The following is a 535-amino-acid chain: Cytochrome c oxidase subunit 1 (535 aa).

The chain crosses the membrane as a helical span at residues 17–37; the sequence is ILYFIFAIFSGVIGSTMSLII. E40, A43, and G45 together coordinate Ca(2+). Transmembrane regions (helical) follow at residues 58–78, 104–124, 147–167, 184–204, 236–256, and 268–288; these read VLVV…GLVG, FWLL…ESWA, LGIF…INFI, PLFV…LPVL, LFWF…FGII, and VFGE…GFLV. Residue H63 participates in Fe(II)-heme a binding. H242 serves as a coordination point for Cu cation. A cross-link (1'-histidyl-3'-tyrosine (His-Tyr)) is located at residues 242–246; it reads HPEVY. Y246 lines the O2 pocket. H291 and H292 together coordinate Cu cation. 2 consecutive transmembrane segments (helical) span residues 311–331 and 339–359; these read MVIA…LYGG and MLYA…GVAL. Mg(2+) contacts are provided by H369 and D370. 2 consecutive transmembrane segments (helical) span residues 373-393 and 413-433; these read YVVG…LFAG and IQFW…HFLG. H377 provides a ligand contact to heme a3. Residue H379 coordinates Fe(II)-heme a. P442 lines the Ca(2+) pocket. A helical transmembrane segment spans residues 453–473; it reads YVSSIGSVIAIISLALFIYII.

The protein belongs to the heme-copper respiratory oxidase family. Component of the cytochrome c oxidase (complex IV, CIV), a multisubunit enzyme composed of a catalytic core of 3 subunits and several supernumerary subunits. The complex exists as a monomer or a dimer and forms supercomplexes (SCs) in the inner mitochondrial membrane with ubiquinol-cytochrome c oxidoreductase (cytochrome b-c1 complex, complex III, CIII). Heme is required as a cofactor. Requires Cu cation as cofactor.

It is found in the mitochondrion inner membrane. It carries out the reaction 4 Fe(II)-[cytochrome c] + O2 + 8 H(+)(in) = 4 Fe(III)-[cytochrome c] + 2 H2O + 4 H(+)(out). Its pathway is energy metabolism; oxidative phosphorylation. Its function is as follows. Component of the cytochrome c oxidase, the last enzyme in the mitochondrial electron transport chain which drives oxidative phosphorylation. The respiratory chain contains 3 multisubunit complexes succinate dehydrogenase (complex II, CII), ubiquinol-cytochrome c oxidoreductase (cytochrome b-c1 complex, complex III, CIII) and cytochrome c oxidase (complex IV, CIV), that cooperate to transfer electrons derived from NADH and succinate to molecular oxygen, creating an electrochemical gradient over the inner membrane that drives transmembrane transport and the ATP synthase. Cytochrome c oxidase is the component of the respiratory chain that catalyzes the reduction of oxygen to water. Electrons originating from reduced cytochrome c in the intermembrane space (IMS) are transferred via the dinuclear copper A center (CU(A)) of subunit 2 and heme A of subunit 1 to the active site in subunit 1, a binuclear center (BNC) formed by heme A3 and copper B (CU(B)). The BNC reduces molecular oxygen to 2 water molecules using 4 electrons from cytochrome c in the IMS and 4 protons from the mitochondrial matrix. This Wickerhamomyces canadensis (Yeast) protein is Cytochrome c oxidase subunit 1 (COX1).